We begin with the raw amino-acid sequence, 380 residues long: Glucose-1-phosphate adenylyltransferase (380 aa).

Residues Gly164, 179–180, and Ser190 contribute to the alpha-D-glucose 1-phosphate site; that span reads EK.

Belongs to the bacterial/plant glucose-1-phosphate adenylyltransferase family. In terms of assembly, homotetramer.

It catalyses the reaction alpha-D-glucose 1-phosphate + ATP + H(+) = ADP-alpha-D-glucose + diphosphate. The protein operates within glycan biosynthesis; glycogen biosynthesis. Functionally, involved in the biosynthesis of ADP-glucose, a building block required for the elongation reactions to produce glycogen. Catalyzes the reaction between ATP and alpha-D-glucose 1-phosphate (G1P) to produce pyrophosphate and ADP-Glc. The protein is Glucose-1-phosphate adenylyltransferase of Streptococcus sanguinis (strain SK36).